Consider the following 343-residue polypeptide: NADP-dependent alkenal double bond reductase P2 (343 aa).

Y52 and Y79 together coordinate substrate. Residues 164-167 (GAVG), K190, Y206, N230, 252-258 (CGMISQY), 282-284 (FVV), and N332 contribute to the NADP(+) site.

It belongs to the NADP-dependent oxidoreductase L4BD family. As to quaternary structure, homodimer.

It carries out the reaction an n-alkanal + NAD(+) = an alk-2-enal + NADH + H(+). The enzyme catalyses an n-alkanal + NADP(+) = an alk-2-enal + NADPH + H(+). Its function is as follows. Catalyzes the reduction of the 7-8 double bond of phenylpropanal substrates, such as p-coumaryl aldehyde and coniferyl aldehyde (in vitro). Has activity towards toxic substrates, such as 4-hydroxy-(2E)-nonenal (in vitro). May play a distinct role in plant antioxidant defense and is possibly involved in NAD(P)/NAD(P)h homeostasis. This is NADP-dependent alkenal double bond reductase P2 (P2) from Arabidopsis thaliana (Mouse-ear cress).